A 199-amino-acid chain; its full sequence is FMN-dependent NADH:quinone oxidoreductase 2 (199 aa).

FMN-binding positions include Ser10, 17–19 (SDS), and 135–138 (TKGG).

This sequence belongs to the azoreductase type 1 family. As to quaternary structure, homodimer. It depends on FMN as a cofactor.

It carries out the reaction 2 a quinone + NADH + H(+) = 2 a 1,4-benzosemiquinone + NAD(+). The catalysed reaction is N,N-dimethyl-1,4-phenylenediamine + anthranilate + 2 NAD(+) = 2-(4-dimethylaminophenyl)diazenylbenzoate + 2 NADH + 2 H(+). Quinone reductase that provides resistance to thiol-specific stress caused by electrophilic quinones. Its function is as follows. Also exhibits azoreductase activity. Catalyzes the reductive cleavage of the azo bond in aromatic azo compounds to the corresponding amines. The chain is FMN-dependent NADH:quinone oxidoreductase 2 from Mesoplasma florum (strain ATCC 33453 / NBRC 100688 / NCTC 11704 / L1) (Acholeplasma florum).